We begin with the raw amino-acid sequence, 35 residues long: Putative neurotoxin (35 aa).

One can recognise an LCN-type CS-alpha/beta domain in the interval 1–35 (KEGYPKNSEGCKITCLFNDPYCKGLCINLSTQADY).

Expressed by the venom gland.

The protein localises to the secreted. Functionally, causes paralysis and death in insects (A.domestica). In Rhopalurus junceus (Caribbean blue scorpion), this protein is Putative neurotoxin.